The primary structure comprises 266 residues: Zinc finger protein CG30 (266 aa).

An RING-type zinc finger spans residues 8-63 (CNICFSVAEIKNYFMQPIDRLTMIPVLELDTCKHQLCSMCIRKIRKRKKTPCPLCR).

It is found in the host nucleus. Its function is as follows. Plays a role in the proper expression of late and very late genes. In Bombyx mori nuclear polyhedrosis virus (BmNPV), this protein is Zinc finger protein CG30 (CG30).